The chain runs to 612 residues: BTB/POZ domain-containing protein 9 (612 aa).

Positions 36–104 constitute a BTB domain; the sequence is GDVTFVVEKK…IYTGRATLTD (69 aa). A BACK domain is found at 142 to 240; sequence VCMTFDVASL…SLTELLNVVR (99 aa). Residues 560–612 form a disordered region; the sequence is QSSQKEENSEESGTGDTSLAGQQLDSHALRAPSGSSLPSSPGSNSRSPNRQHQ. Polar residues predominate over residues 573–584; it reads TGDTSLAGQQLD. Positions 588 to 612 are enriched in low complexity; it reads LRAPSGSSLPSSPGSNSRSPNRQHQ.

Detected in the brain (at protein level). Moderately expressed in all specific brain regions examined. Expressed in the dopaminergic neurons of the substantia nigra and A11 neurons. Highly expressed in kidney and moderately expressed in all other adult and fetal tissues.

The sequence is that of BTB/POZ domain-containing protein 9 (BTBD9) from Homo sapiens (Human).